A 1238-amino-acid polypeptide reads, in one-letter code: Cullin-associated NEDD8-dissociated protein 1 (1238 aa).

HEAT repeat units lie at residues 41–78 (TYENKIVTKLLALTADSANNVQENVVKCLGLLIKRVKD), 126–167 (LVIK…KYGS), 171–208 (GDLENIQKVVLPKLNATRPAIRKRAILCLANIAFPSPD), 210–247 (LFNSLLDYIIKSIEEAKKPDHISTLIQAIGAICKSSGY), and 251–292 (KYLP…KCQK). Residues 315–354 (YSDDGEGEEDGDEEEEEMETSGDNDEEQEEEEEEEDLSDD) form a disordered region. 9 HEAT repeats span residues 382-419 (ELYQKVAPVLYNRFKEREENVRLDIFTTFVLLLKQLNK), 432-469 (QQVPKLVQSISKSLIDKSIRTRVGAIALLKELVMIIPG), 603-641 (EIQSELQPCLSILLERLDNELTRVVTVKVLSRIINSSIN), 646-683 (SILPSAIKLLSTFLRKNNRVLKQSSLIALNDIVKVCPN), 688-725 (SLLTGILTEMATLINESDLQITHLAFVFIQNLLKNYSE), 853-890 (HENENLQESVYKTFEANNEEIKQVAALCLGDIAVCSLQ), 933-966 (PFLQSILPLLFDNCVNEEEGTRNIVAECLGKLSM), 967-1004 (IEPNEIIPKLVEKIKSPSPLERSTIVTSIKFSIMENKE), and 1008-1045 (QYLAPNISQFLSLLHDGDLIVRRSALLSLNYIAHNKPN).

It belongs to the CAND family.

The protein localises to the nucleus. Its function is as follows. Key assembly factor of SCF (SKP1-CUL1-F-box protein) E3 ubiquitin ligase complexes that promotes the exchange of the substrate-recognition F-box subunit in SCF complexes, thereby playing a key role in the cellular repertoire of SCF complexes. Acts as a F-box protein exchange factor. The protein is Cullin-associated NEDD8-dissociated protein 1 (cand1) of Dictyostelium discoideum (Social amoeba).